The following is a 715-amino-acid chain: Polyribonucleotide nucleotidyltransferase (715 aa).

Residues aspartate 491 and aspartate 497 each contribute to the Mg(2+) site. The region spanning 558–617 (PKIMTMTINPEKIRDVIGPQGRVINKIIEETGVKIDIEQDGRVFIASINHEANLRAKQII) is the KH domain. Residues 627 to 695 (GQVYLGTVKR…DQGRVNLSRK (69 aa)) enclose the S1 motif domain.

This sequence belongs to the polyribonucleotide nucleotidyltransferase family. The cofactor is Mg(2+).

It localises to the cytoplasm. It carries out the reaction RNA(n+1) + phosphate = RNA(n) + a ribonucleoside 5'-diphosphate. Its function is as follows. Involved in mRNA degradation. Catalyzes the phosphorolysis of single-stranded polyribonucleotides processively in the 3'- to 5'-direction. This Brevibacillus brevis (strain 47 / JCM 6285 / NBRC 100599) protein is Polyribonucleotide nucleotidyltransferase.